The primary structure comprises 380 residues: Reducing-end xylose-releasing exo-oligoxylanase Rex8A (380 aa).

Glu-70 serves as the catalytic Proton donor. The active-site Proton acceptor is Asp-265.

The protein belongs to the glycosyl hydrolase 8 (cellulase D) family.

It carries out the reaction Hydrolysis of (1-&gt;4)-beta-D-xylose residues from the reducing end of oligosaccharides.. Its pathway is glycan degradation; xylan degradation. Involved in depolymerization of xylan, a major component of the lignocellulosic substrates. Acts as an exo-oligoxylanase that efficiently hydrolyzes xylooligosaccharides, releasing xylose from their reducing ends. Hydrolyzes xylooligomers of 3 to 6 xylose units to xylose and xylobiose. Besides linear xylooligosaccharides, also hydrolyzes branched xylooligomers, such as xylooligomers decorated with 4-O-methyl-D-glucuronic acid moieties. Its proposed role is the degradation of xylooligomers produced by the activity of extracellular xylanases once they have been transported inside cells. Shows minor activity on polymeric xylan (glucuronoxylan from beechwood). Is not active on cellooligosaccharides or cellulosic substrates, or on other polysaccharides such as pectin, polygalacturonic acid, laminarin, or lichenan. This Paenibacillus barcinonensis protein is Reducing-end xylose-releasing exo-oligoxylanase Rex8A.